The sequence spans 1300 residues: Insulin receptor-related protein (1300 aa).

The N-terminal stretch at 1-26 is a signal peptide; sequence MAVPALWPWGVHLLMSLLSLGSGLDT. 2 N-linked (GlcNAc...) asparagine glycosylation sites follow: Asn47 and Asn100. 9 disulfides stabilise this stretch: Cys214–Cys222, Cys216–Cys228, Cys229–Cys237, Cys233–Cys246, Cys249–Cys258, Cys262–Cys274, Cys280–Cys300, Cys304–Cys317, and Cys320–Cys324. A glycan (N-linked (GlcNAc...) asparagine) is linked at Asn311. Residues Asn411, Asn492, Asn528, Asn616, Asn634, Asn756, Asn885, and Asn898 are each glycosylated (N-linked (GlcNAc...) asparagine). Fibronectin type-III domains follow at residues 483–603 and 607–707; these read QTRT…TLPA and VPQD…AQEV. A disulfide bond links Cys657 and Cys864. Over 747–921 the chain is Extracellular; that stretch reads EAGLLRLGKN…LEEEDTGGMR (175 aa). In terms of domain architecture, Fibronectin type-III 3 spans 818-913; it reads IPGKVAWKAA…GVTFYITDLE (96 aa). A helical transmembrane segment spans residues 922–943; it reads IFLTVTPVGFMLLVTLAALGFF. The Cytoplasmic portion of the chain corresponds to 944 to 1300; sequence YSRKRNSTLY…YSAPNGGPGH (357 aa). The Protein kinase domain occupies 979 to 1254; sequence IAIIRELGQG…RIQDELRPSF (276 aa). Residues 985–993 and Lys1013 contribute to the ATP site; that span reads LGQGSFGMV. Asp1115 functions as the Proton acceptor in the catalytic mechanism. Residues Tyr1145 and Tyr1146 each carry the phosphotyrosine; by autocatalysis modification. The disordered stretch occupies residues 1273–1300; that stretch reads LPTEAEPDSPPTLNGASDYSAPNGGPGH.

This sequence belongs to the protein kinase superfamily. Tyr protein kinase family. Insulin receptor subfamily. As to quaternary structure, probable tetramer of 2 alpha and 2 beta chains linked by disulfide bonds. The alpha chains contribute to the formation of the ligand-binding domain, while the beta chains carry the kinase domain. Autophosphorylated on tyrosine residues between pH 7.9 and pH 10.5. Highly expressed in the islets as well as in pancreatic beta-cells.

Its subcellular location is the membrane. It catalyses the reaction L-tyrosyl-[protein] + ATP = O-phospho-L-tyrosyl-[protein] + ADP + H(+). Its function is as follows. Receptor with tyrosine-protein kinase activity. Functions as a pH sensing receptor which is activated by increased extracellular pH. Activates an intracellular signaling pathway that involves IRS1 and AKT1/PKB. The sequence is that of Insulin receptor-related protein (Insrr) from Mus musculus (Mouse).